A 526-amino-acid polypeptide reads, in one-letter code: Bifunctional purine biosynthesis protein PurH (526 aa).

The MGS-like domain occupies 1-145; the sequence is MIRTALLSVS…KNHQDVTVLI (145 aa).

The protein belongs to the PurH family.

It carries out the reaction (6R)-10-formyltetrahydrofolate + 5-amino-1-(5-phospho-beta-D-ribosyl)imidazole-4-carboxamide = 5-formamido-1-(5-phospho-D-ribosyl)imidazole-4-carboxamide + (6S)-5,6,7,8-tetrahydrofolate. The enzyme catalyses IMP + H2O = 5-formamido-1-(5-phospho-D-ribosyl)imidazole-4-carboxamide. It participates in purine metabolism; IMP biosynthesis via de novo pathway; 5-formamido-1-(5-phospho-D-ribosyl)imidazole-4-carboxamide from 5-amino-1-(5-phospho-D-ribosyl)imidazole-4-carboxamide (10-formyl THF route): step 1/1. The protein operates within purine metabolism; IMP biosynthesis via de novo pathway; IMP from 5-formamido-1-(5-phospho-D-ribosyl)imidazole-4-carboxamide: step 1/1. In Polynucleobacter asymbioticus (strain DSM 18221 / CIP 109841 / QLW-P1DMWA-1) (Polynucleobacter necessarius subsp. asymbioticus), this protein is Bifunctional purine biosynthesis protein PurH.